The following is a 464-amino-acid chain: Non-structural protein NS-S (464 aa).

The protein belongs to the tospovirus NS-S protein family. Interacts with host MYC2.

In terms of biological role, multifunctional protein that plays two independent roles: viral suppressor of host RNAi (VSR) and viral inducer of host attractiveness to insect vectors (VIA). Acts as a suppressor of RNA-mediated gene silencing, also known as post-transcriptional gene silencing (PTGS), a mechanism of plant viral defense that limits the accumulation of viral RNAs. Also inhibits signal transduction by the phytohormone jasmonate, making the infected plant more attractive to aphids, which are the second host to play a role as a dissemination vector. Acts by binding to and inhibiting MYC2 transcription factor. This is Non-structural protein NS-S (NSS) from Frankliniella occidentalis (Western flower thrips).